A 290-amino-acid chain; its full sequence is 4-diphosphocytidyl-2-C-methyl-D-erythritol kinase (290 aa).

Lys12 is an active-site residue. An ATP-binding site is contributed by 97 to 107 (PVASGIGGGSA). Asp139 is an active-site residue.

The protein belongs to the GHMP kinase family. IspE subfamily.

It carries out the reaction 4-CDP-2-C-methyl-D-erythritol + ATP = 4-CDP-2-C-methyl-D-erythritol 2-phosphate + ADP + H(+). It participates in isoprenoid biosynthesis; isopentenyl diphosphate biosynthesis via DXP pathway; isopentenyl diphosphate from 1-deoxy-D-xylulose 5-phosphate: step 3/6. Catalyzes the phosphorylation of the position 2 hydroxy group of 4-diphosphocytidyl-2C-methyl-D-erythritol. This Parvibaculum lavamentivorans (strain DS-1 / DSM 13023 / NCIMB 13966) protein is 4-diphosphocytidyl-2-C-methyl-D-erythritol kinase.